The primary structure comprises 522 residues: MSEHSHDNKPGELEESRLVVDNDFEVAPVNDRLFGSFVEHLGRCVYDGIYEPGHPEADEDGFRKDVIELVKELGATTIRYPGGNFVSGYRWEDGVGPRDERPRRLDLAWHSTETNQFGLHEMAKWLEKTGGNELMEAVNLGTRGLEEALDLLEYANIPGGTKLSEERRANGADQPFGIKMWCLGNEMDGPWQTGHKSAEDYGTLAASVAAGMRAIDPNVELVVCGSSSHVMDTFGKWEETVLEKTFDNVNFVSCHAYYHPELQPDGTRDMKSFLASGVDMDGFINDVAAAIDATKARLKSKHDVFISFDEWNVWYLNEEPSKNPEGIGNWPVAPRLLEDVYSAADAVVFGDLMITLLKNADRVHAASLAQLVNVIAPIMTEPGGPAWRQTTFYPFSLTAKLAKGGTVLEPKLASGTYETDKYGEVPTINSVAVRGEDGTISVFVVNRSMEAANDFAIKLPEGFALSAVEAQTLHEDDLLAKNTLEDQNRVVLHPNTTITSDADTGTVRVTLPPVSWTAVHVK.

Positions 39, 84, and 185 each coordinate alpha-L-arabinofuranose. The Proton donor/acceptor role is filled by Glu186. The alpha-L-arabinofuranose site is built by Tyr257, Glu310, and Gln370. Glu310 (nucleophile) is an active-site residue.

This sequence belongs to the glycosyl hydrolase 51 family. In terms of assembly, homohexamer; trimer of dimers.

It carries out the reaction Hydrolysis of terminal non-reducing alpha-L-arabinofuranoside residues in alpha-L-arabinosides.. It catalyses the reaction (20S)-ginsenoside Rc + H2O = L-arabinofuranose + (20S)-ginsenoside Rd. Its activity is regulated as follows. Completely inhibited by Cu(2+) and partially inhibited by Co(2+) and Ba(2+). Functionally, catalyzes the hydrolysis of p-nitrophenyl-alpha-L-arabinofuranoside (pNP-alphaL-Af) and the hydrolysis of the terminal alpha-L-arabinofuranoside at the C20 position of ginsenoside Rc to produce ginsenoside Rd. Cannot hydrolyze p-nitrophenyl-alpha-L-arabinopyranoside (pNP-alphaL-Ap) and ginsenoside Rb2. This is Exo-alpha-(1-&gt;6)-L-arabinofuranosidase from Bifidobacterium longum.